Here is a 125-residue protein sequence, read N- to C-terminus: Large ribosomal subunit protein bL19 (125 aa).

It belongs to the bacterial ribosomal protein bL19 family.

In terms of biological role, this protein is located at the 30S-50S ribosomal subunit interface and may play a role in the structure and function of the aminoacyl-tRNA binding site. The polypeptide is Large ribosomal subunit protein bL19 (Ehrlichia chaffeensis (strain ATCC CRL-10679 / Arkansas)).